The sequence spans 350 residues: Protein-glutamate methylesterase/protein-glutamine glutaminase 1 (350 aa).

One can recognise a Response regulatory domain in the interval 6-123 (RVLVVDDSAL…GRSVENYAEE (118 aa)). A 4-aspartylphosphate modification is found at D57. The 192-residue stretch at 159–350 (LGASGKIIFV…ARRVLGAVSA (192 aa)) folds into the CheB-type methylesterase domain. Catalysis depends on residues S171, H197, and D293.

Belongs to the CheB family. Post-translationally, phosphorylated by CheA. Phosphorylation of the N-terminal regulatory domain activates the methylesterase activity.

The protein localises to the cytoplasm. It catalyses the reaction [protein]-L-glutamate 5-O-methyl ester + H2O = L-glutamyl-[protein] + methanol + H(+). The catalysed reaction is L-glutaminyl-[protein] + H2O = L-glutamyl-[protein] + NH4(+). In terms of biological role, involved in chemotaxis. Part of a chemotaxis signal transduction system that modulates chemotaxis in response to various stimuli. Catalyzes the demethylation of specific methylglutamate residues introduced into the chemoreceptors (methyl-accepting chemotaxis proteins or MCP) by CheR. Also mediates the irreversible deamidation of specific glutamine residues to glutamic acid. This chain is Protein-glutamate methylesterase/protein-glutamine glutaminase 1, found in Dechloromonas aromatica (strain RCB).